A 121-amino-acid polypeptide reads, in one-letter code: MIAVIGLLLGFLVSALFLIQGKRRRTNDNQEKKRSSSEPVEDVVRPKSYSKSEVAVHNKRNDCWIIIKDKVYDITSYVEEHPGGDAILDHAGDDSTDGFFGPQHATRVFDMIEDFYIGELH.

The chain crosses the membrane as a helical span at residues 1 to 21; the sequence is MIAVIGLLLGFLVSALFLIQG. A disordered region spans residues 24 to 49; sequence RRTNDNQEKKRSSSEPVEDVVRPKSY. A compositionally biased stretch (basic and acidic residues) spans 26–36; it reads TNDNQEKKRSS. The 76-residue stretch at 46–121 folds into the Cytochrome b5 heme-binding domain; it reads PKSYSKSEVA…IEDFYIGELH (76 aa). Heme contacts are provided by His-81 and His-104.

It belongs to the cytochrome b5 family.

The protein localises to the membrane. The protein is Cytochrome B5-like protein of Arabidopsis thaliana (Mouse-ear cress).